Here is a 361-residue protein sequence, read N- to C-terminus: Phospho-N-acetylmuramoyl-pentapeptide-transferase (361 aa).

10 helical membrane passes run alanine 26–arginine 46, threonine 73–leucine 93, tyrosine 97–tyrosine 117, tyrosine 134–methionine 154, valine 168–serine 188, glycine 200–serine 220, threonine 237–phenylalanine 257, valine 264–isoleucine 284, isoleucine 289–valine 309, and isoleucine 340–isoleucine 360.

This sequence belongs to the glycosyltransferase 4 family. MraY subfamily. Mg(2+) is required as a cofactor.

Its subcellular location is the cell inner membrane. The catalysed reaction is UDP-N-acetyl-alpha-D-muramoyl-L-alanyl-gamma-D-glutamyl-meso-2,6-diaminopimeloyl-D-alanyl-D-alanine + di-trans,octa-cis-undecaprenyl phosphate = di-trans,octa-cis-undecaprenyl diphospho-N-acetyl-alpha-D-muramoyl-L-alanyl-D-glutamyl-meso-2,6-diaminopimeloyl-D-alanyl-D-alanine + UMP. The protein operates within cell wall biogenesis; peptidoglycan biosynthesis. In terms of biological role, catalyzes the initial step of the lipid cycle reactions in the biosynthesis of the cell wall peptidoglycan: transfers peptidoglycan precursor phospho-MurNAc-pentapeptide from UDP-MurNAc-pentapeptide onto the lipid carrier undecaprenyl phosphate, yielding undecaprenyl-pyrophosphoryl-MurNAc-pentapeptide, known as lipid I. This chain is Phospho-N-acetylmuramoyl-pentapeptide-transferase, found in Marinobacter nauticus (strain ATCC 700491 / DSM 11845 / VT8) (Marinobacter aquaeolei).